Here is a 433-residue protein sequence, read N- to C-terminus: Trigger factor (433 aa).

Positions 161 to 246 constitute a PPIase FKBP-type domain; sequence EDRVVIDFVG…LKKVENIVLP (86 aa).

Belongs to the FKBP-type PPIase family. Tig subfamily.

It localises to the cytoplasm. It catalyses the reaction [protein]-peptidylproline (omega=180) = [protein]-peptidylproline (omega=0). Functionally, involved in protein export. Acts as a chaperone by maintaining the newly synthesized protein in an open conformation. Functions as a peptidyl-prolyl cis-trans isomerase. The protein is Trigger factor of Actinobacillus pleuropneumoniae serotype 5b (strain L20).